Here is a 235-residue protein sequence, read N- to C-terminus: 7-carboxy-7-deazaguanine synthase (235 aa).

Substrate is bound by residues 25–27 (IQG) and R40. Residues 31-235 (FTGTYSVFVR…PRLHLLVQLP (205 aa)) enclose the Radical SAM core domain. 3 residues coordinate [4Fe-4S] cluster: C44, C48, and C51. A Mg(2+)-binding site is contributed by T53. T85 contacts substrate. S-adenosyl-L-methionine is bound by residues G87 and 135–137 (SPK). Residue P235 participates in substrate binding.

The protein belongs to the radical SAM superfamily. 7-carboxy-7-deazaguanine synthase family. As to quaternary structure, homodimer. [4Fe-4S] cluster is required as a cofactor. Requires S-adenosyl-L-methionine as cofactor. Mg(2+) serves as cofactor.

It carries out the reaction 6-carboxy-5,6,7,8-tetrahydropterin + H(+) = 7-carboxy-7-deazaguanine + NH4(+). The protein operates within purine metabolism; 7-cyano-7-deazaguanine biosynthesis. Catalyzes the complex heterocyclic radical-mediated conversion of 6-carboxy-5,6,7,8-tetrahydropterin (CPH4) to 7-carboxy-7-deazaguanine (CDG), a step common to the biosynthetic pathways of all 7-deazapurine-containing compounds. The chain is 7-carboxy-7-deazaguanine synthase from Hyperthermus butylicus (strain DSM 5456 / JCM 9403 / PLM1-5).